We begin with the raw amino-acid sequence, 117 residues long: Protein Wnt-10b (117 aa).

A lipid anchor (O-palmitoleoyl serine; by PORCN) is attached at serine 1. A disulfide bridge links cysteine 83 with cysteine 98. An N-linked (GlcNAc...) asparagine glycan is attached at asparagine 84.

The protein belongs to the Wnt family. In terms of processing, palmitoleoylation is required for efficient binding to frizzled receptors. Depalmitoleoylation leads to Wnt signaling pathway inhibition.

It localises to the secreted. The protein localises to the extracellular space. The protein resides in the extracellular matrix. Functionally, member of the Wnt ligand gene family that encodes for secreted proteins, which activate the Wnt signaling cascade. Involved in neurogenesis. Performs a partially redundant function with wnt1 in the formation of the midbrain-hindbrain boundary (MHB) organizer. In Plethodon jordani (Red-cheeked salamander), this protein is Protein Wnt-10b (WNT-10B).